We begin with the raw amino-acid sequence, 343 residues long: Zinc finger CCCH domain-containing protein 1 (343 aa).

A disordered region spans residues 1–102 (MSDSGEPKPS…PERSVFHYDS (102 aa)). Residues 7–25 (PKPSQQEEPLPQPAAQETQ) show a composition bias toward low complexity. Basic residues predominate over residues 35-44 (KPTKSKNIRK). Over residues 79 to 91 (SSGPSKSSTTTSG) the composition is skewed to low complexity. A C3H1-type zinc finger spans residues 200–228 (DYQPDICKDYKETGYCGYGDSCKFLHDRG). Residues 249 to 268 (RNKAMGVEDEDDEADKDSDE) form a disordered region. Residues 255–268 (VEDEDDEADKDSDE) are compositionally biased toward acidic residues. The RING-type zinc finger occupies 277–315 (CFICREPFVDPVVTKCKHYFCEHCALKHHTKNKKCFVCN).

This chain is Zinc finger CCCH domain-containing protein 1, found in Arabidopsis thaliana (Mouse-ear cress).